The primary structure comprises 631 residues: Chaperone protein DnaK (631 aa).

Threonine 197 bears the Phosphothreonine; by autocatalysis mark. The tract at residues 600-631 (KKENPQAADAQQGNTANAGKKKDDDVIDAEVE) is disordered.

It belongs to the heat shock protein 70 family.

Acts as a chaperone. The polypeptide is Chaperone protein DnaK (Wolinella succinogenes (strain ATCC 29543 / DSM 1740 / CCUG 13145 / JCM 31913 / LMG 7466 / NCTC 11488 / FDC 602W) (Vibrio succinogenes)).